The following is a 365-amino-acid chain: Zinc transporter 7 (365 aa).

The signal sequence occupies residues 1 to 26 (MAYSKACYKLTTITILLLSFTLPSLA). Residues 27-56 (GNAENADVSECKAESGDLSCHNNKEAQKLK) lie on the Extracellular side of the membrane. Residues 57 to 77 (IIAIPSILVASMIGVSLPLFS) traverse the membrane as a helical segment. Residues 78 to 90 (RSIPALGPDREMS) lie on the Cytoplasmic side of the membrane. Residues 91–111 (VIVKTLASGVILATGFMHVLP) form a helical membrane-spanning segment. Residues 112-129 (DSFDDLTSKCLPEDPWQK) are Extracellular-facing. The chain crosses the membrane as a helical span at residues 130–150 (FPFATFITMISALLVLMIESF). Residues 151-210 (AMCAYARRTSKREGEVVPLENGSNSVDTQNDIQTLENGSSYVEKQEKVNEDKTSELLRNK) lie on the Cytoplasmic side of the membrane. A helical membrane pass occupies residues 211–231 (VIAQILELGIVVHSVVIGLAM). The Extracellular segment spans residues 232–242 (GASDNKCTVQS). A helical membrane pass occupies residues 243-263 (LIAALCFHQLFEGMGLGGSIL). Residues 264-272 (QAQFKSKTN) are Cytoplasmic-facing. A helical membrane pass occupies residues 273-293 (WTMVFFFSVTTPFGIVLGMAI). The Extracellular segment spans residues 294–304 (QKIYDETSPTA). The chain crosses the membrane as a helical span at residues 305–325 (LIVVGVLNACSAGLLIYMALV). The Cytoplasmic segment spans residues 326-344 (NLLAHEFFGPKIQGNIKLH). The helical transmembrane segment at 345–365 (VLGYVATFTGAAGMSLMAKWA) threads the bilayer.

It belongs to the ZIP transporter (TC 2.A.5) family.

Its subcellular location is the cell membrane. Functionally, probably mediates zinc uptake from the rhizosphere. This is Zinc transporter 7 (ZIP7) from Arabidopsis thaliana (Mouse-ear cress).